A 106-amino-acid chain; its full sequence is Large ribosomal subunit protein eL36 (106 aa).

Residues 75–93 show a composition bias toward basic and acidic residues; the sequence is VRQEKVGHSQESKEEERGD. The segment at 75 to 106 is disordered; sequence VRQEKVGHSQESKEEERGDVQCSPPDEGWWWY.

The protein belongs to the eukaryotic ribosomal protein eL36 family.

The chain is Large ribosomal subunit protein eL36 (RPL36) from Daucus carota (Wild carrot).